The chain runs to 476 residues: Protein EARLY HEADING DATE 2 (476 aa).

The span at 1 to 13 (MLLSDLSSDQEAT) shows a compositional bias: polar residues. The disordered stretch occupies residues 1–27 (MLLSDLSSDQEATGSNSHGGGGGGDRM). 2 consecutive C2H2-type zinc fingers follow at residues 106 to 128 (FVCEVCNKGFQRDQNLQLHRRGH) and 156 to 186 (YVCPEPTCVHHDPARALGDLTGIKKHFSRKH). 2 short sequence motifs (nuclear localization signal) span residues 124 to 131 (HRRGHNLP) and 178 to 185 (IKKHFSRK). The segment at 191–214 (WRCERCGKRYAVHSDWKAHVKNCG) adopts a C2H2-type 2; degenerate zinc-finger fold. Cysteine 193, cysteine 196, histidine 209, cysteine 213, cysteine 220, cysteine 222, histidine 235, and cysteine 239 together coordinate Zn(2+). A CCHC-type 2; atypical zinc finger spans residues 218-241 (YRCDCGILFSRKDSLLTHRAFCDA). Positions 228-240 (RKDSLLTHRAFCD) are SHR-binding.

The protein resides in the nucleus. Its function is as follows. Transcription activator that acts as a flowering master switch in both long and short days, independently of the circadian clock. Promotes flowering upstream of HD1 by up-regulating FTL1, FTL4, FTL5, FTL6, EHD1, HD3A and RFT1. Seems to repress FTL11 expression. May recognize the consensus motif 5'-TTTGTCGTAAT-3' in target gene promoters. This is Protein EARLY HEADING DATE 2 from Oryza sativa subsp. indica (Rice).